Consider the following 132-residue polypeptide: UPF0299 membrane protein YohJ (132 aa).

4 consecutive transmembrane segments (helical) span residues 7–27 (IIWQYLRAFVLIYACLYAGIF), 31–51 (LLPVTIPGSIIGMLILFVLLA), 63–83 (GCYVLIRYMALLFVPIGVGVM), and 93–113 (FGPVVVSCAVSTLVVFLVVSW).

The protein belongs to the UPF0299 family.

It is found in the cell inner membrane. The protein is UPF0299 membrane protein YohJ of Shigella boydii serotype 4 (strain Sb227).